Consider the following 754-residue polypeptide: MEYIYQYFWIITFISLPVPILIGVGLLLFPTATKSLRRMWVFPSVLLLSIIMLFSTYLAIQQVNNPSIYLSIWSWTINNDFSLEFGYLVDPLTSIMLILITTVGILVLIYSDNYMSHDQGYLRFFAYMSFFNTSMVGLVTSSNLIQIYFFWELVGMCSYLLIGFWFTRPTAANACQKAFVTNRVGDFGLLLGILGFYWITGSLEFRDLFEIFNNLVYNNEVNLLFATLCAFLLFAGAIAKSAQFPLHVWLPDAMEGPTPISALIHAATMVAAGIFLGARLLPLFIVMPYIMNLIALLGIITLLLGATLAFAQKDIKRGLAYSTMSQLGYMMLALGMGSYRAALFHLITHAYSKALLFLGSGSIIHSMESIVGYSPDKSQNLVLMGGLKKHVPITKTSFLLGTLSLCGIPPLGCFWSKDEILNDSWLYSPIFAIIAFSTAGLTAFYMFRIYLLTFEGHLNLYFQTYSGKKRSSVYSISLWGREEQKWIKTKFRLLPLLTMNNNKKTSFFFKKKYLINRNVRNLRGPIITIPNPNFGTKNSFSYPHESENTMLFSMLVLGLFTLFIGIIGIPFFNQEGIQLDILTKLLTPSINLLYQNKKNLMDWDWYEFITNATYSVSIASFGILIASFLYNPGYSSLQNFNLFNSFVKGISKKLKFFEDKIINVTYDWSYNRGYIDFFYATFLIQGIRILSELIHFFDRQVIDGITNGVGISSFFVGEGIKYVGVGRISSYLLVYISYVLIFLLIYSRGVLFFL.

Helical transmembrane passes span 8-28, 40-60, 89-109, 125-145, 147-167, 185-205, 219-239, 258-278, 280-300, 327-347, 354-374, 396-416, 425-445, 552-572, 608-628, and 733-753; these read FWII…GLLL, WVFP…YLAI, VDPL…LVLI, FAYM…SNLI, IYFF…FWFT, GDFG…SLEF, NEVN…GAIA, TPIS…FLGA, LLPL…LGII, LGYM…FHLI, ALLF…VGYS, TSFL…CFWS, WLYS…TAFY, FSML…IPFF, FITN…IASF, and LVYI…VLFF.

It belongs to the complex I subunit 5 family. As to quaternary structure, NDH is composed of at least 16 different subunits, 5 of which are encoded in the nucleus.

Its subcellular location is the plastid. The protein localises to the chloroplast thylakoid membrane. The catalysed reaction is a plastoquinone + NADH + (n+1) H(+)(in) = a plastoquinol + NAD(+) + n H(+)(out). It carries out the reaction a plastoquinone + NADPH + (n+1) H(+)(in) = a plastoquinol + NADP(+) + n H(+)(out). In terms of biological role, NDH shuttles electrons from NAD(P)H:plastoquinone, via FMN and iron-sulfur (Fe-S) centers, to quinones in the photosynthetic chain and possibly in a chloroplast respiratory chain. The immediate electron acceptor for the enzyme in this species is believed to be plastoquinone. Couples the redox reaction to proton translocation, and thus conserves the redox energy in a proton gradient. The sequence is that of NAD(P)H-quinone oxidoreductase subunit 5, chloroplastic (ndhF) from Morus indica (Mulberry).